A 211-amino-acid polypeptide reads, in one-letter code: MERIMSTVSVVNTNNEKVDEIELNDAIFNREVKEYILHDVVRMQRAAKRAGTASTKTRVEVRGGGAKPWRQKGTGRARAGSRTSPLWRGGGVTFGPKPRDYSFKLNRKVRQQAVSMALSARFQEGNLIVLDNFIMDAIKTKEFASTMKTLELANALIVMDDASENLSKSCRNVHGYRILPAEGLNVYDILLHKKVVLVKPVIESLEKRLMV.

The disordered stretch occupies residues 48–89; the sequence is KRAGTASTKTRVEVRGGGAKPWRQKGTGRARAGSRTSPLWRG.

It belongs to the universal ribosomal protein uL4 family. In terms of assembly, part of the 50S ribosomal subunit.

Functionally, one of the primary rRNA binding proteins, this protein initially binds near the 5'-end of the 23S rRNA. It is important during the early stages of 50S assembly. It makes multiple contacts with different domains of the 23S rRNA in the assembled 50S subunit and ribosome. In terms of biological role, forms part of the polypeptide exit tunnel. In Desulfotalea psychrophila (strain LSv54 / DSM 12343), this protein is Large ribosomal subunit protein uL4.